The chain runs to 199 residues: Elongation factor Ts (199 aa).

The interval 82–85 is involved in Mg(2+) ion dislocation from EF-Tu; that stretch reads TDFV.

The protein belongs to the EF-Ts family.

It is found in the cytoplasm. In terms of biological role, associates with the EF-Tu.GDP complex and induces the exchange of GDP to GTP. It remains bound to the aminoacyl-tRNA.EF-Tu.GTP complex up to the GTP hydrolysis stage on the ribosome. The protein is Elongation factor Ts of Leptospira interrogans serogroup Icterohaemorrhagiae serovar copenhageni (strain Fiocruz L1-130).